A 160-amino-acid polypeptide reads, in one-letter code: General odorant-binding protein 2 (160 aa).

Positions 1-20 (MFSFLILVFVASVADSVIGT) are cleaved as a signal peptide. Disulfide bonds link C38/C73, C69/C127, and C116/C136.

Belongs to the PBP/GOBP family. As to quaternary structure, homodimer. Detected in antenna (at protein level). Expressed at high levels in antenna.

Its function is as follows. Present in the aqueous fluid surrounding olfactory sensory dendrites and are thought to aid in the capture and transport of hydrophobic odorants into and through this fluid. In Bombyx mori (Silk moth), this protein is General odorant-binding protein 2.